The sequence spans 332 residues: Protoheme IX farnesyltransferase (332 aa).

The next 7 helical transmembrane spans lie at 63–83 (LICT…LNCL), 109–129 (TVFL…ISGV), 132–152 (LAAG…TIIL), 160–180 (IVFG…AATG), 188–208 (WLFG…AILL), 245–265 (ILGV…LLPF), and 286–306 (AKGL…LLLI).

The protein belongs to the UbiA prenyltransferase family. Protoheme IX farnesyltransferase subfamily.

It localises to the cell inner membrane. It catalyses the reaction heme b + (2E,6E)-farnesyl diphosphate + H2O = Fe(II)-heme o + diphosphate. Its pathway is porphyrin-containing compound metabolism; heme O biosynthesis; heme O from protoheme: step 1/1. Functionally, converts heme B (protoheme IX) to heme O by substitution of the vinyl group on carbon 2 of heme B porphyrin ring with a hydroxyethyl farnesyl side group. This Prochlorococcus marinus (strain MIT 9515) protein is Protoheme IX farnesyltransferase.